The following is a 293-amino-acid chain: MNAIANLAATPGADLGECLADLAVDALIDEAELSPKPALVDRRGNGAHADLHLGLMQASALSLWPCFKEMADAAQRHGRIDARLRGVLGQLGRDGEAAMLRTTEGVNTHRGAIWALGLLVAAAALEPRRTQAGEVAARAGRIALLDDPAAAIGDSHGERVRRRYGVGGAREEARLCFPRAVRHGLPQLWRSREGGAGEQNARLDALLAIMSVLDDTCVLHRAGRVGLAAMQDGARAVLAAGGSASLAGRRRLCELDRRLLALNASPGGAADLLAACLFLDRLPAVSGGWAGSL.

The protein belongs to the CitG/MdcB family.

The enzyme catalyses 3'-dephospho-CoA + ATP = 2'-(5''-triphospho-alpha-D-ribosyl)-3'-dephospho-CoA + adenine. Involved in the formation of 2-(5''-phosphoribosyl)-3'-dephosphocoenzyme-A, the prosthetic group of the acyl-carrier protein of the malonate decarboxylase. This Pseudomonas aeruginosa (strain ATCC 15692 / DSM 22644 / CIP 104116 / JCM 14847 / LMG 12228 / 1C / PRS 101 / PAO1) protein is Probable 2-(5''-triphosphoribosyl)-3'-dephosphocoenzyme-A synthase.